We begin with the raw amino-acid sequence, 187 residues long: UPF0301 protein HSM_1900 (187 aa).

It belongs to the UPF0301 (AlgH) family.

This chain is UPF0301 protein HSM_1900, found in Histophilus somni (strain 2336) (Haemophilus somnus).